Consider the following 566-residue polypeptide: Glucose-6-phosphate isomerase (566 aa).

The active-site Proton donor is the glutamate 374. Catalysis depends on residues histidine 405 and lysine 529.

The protein belongs to the GPI family.

Its subcellular location is the cytoplasm. It catalyses the reaction alpha-D-glucose 6-phosphate = beta-D-fructose 6-phosphate. The protein operates within carbohydrate biosynthesis; gluconeogenesis. It participates in carbohydrate degradation; glycolysis; D-glyceraldehyde 3-phosphate and glycerone phosphate from D-glucose: step 2/4. In terms of biological role, catalyzes the reversible isomerization of glucose-6-phosphate to fructose-6-phosphate. This is Glucose-6-phosphate isomerase from Bifidobacterium longum (strain NCC 2705).